The sequence spans 439 residues: Ribosomal protein uS12 methylthiotransferase RimO (439 aa).

Positions 2–114 constitute an MTTase N-terminal domain; that stretch reads SKLYLMSLGC…IDEMILKKTN (113 aa). The [4Fe-4S] cluster site is built by Cys-11, Cys-45, Cys-77, Cys-146, Cys-150, and Cys-153. The Radical SAM core domain maps to 132 to 363; it reads TGSNSHAFIK…VDEVIEKSFE (232 aa).

Belongs to the methylthiotransferase family. RimO subfamily. [4Fe-4S] cluster serves as cofactor.

The protein resides in the cytoplasm. The catalysed reaction is L-aspartate(89)-[ribosomal protein uS12]-hydrogen + (sulfur carrier)-SH + AH2 + 2 S-adenosyl-L-methionine = 3-methylsulfanyl-L-aspartate(89)-[ribosomal protein uS12]-hydrogen + (sulfur carrier)-H + 5'-deoxyadenosine + L-methionine + A + S-adenosyl-L-homocysteine + 2 H(+). Catalyzes the methylthiolation of an aspartic acid residue of ribosomal protein uS12. The chain is Ribosomal protein uS12 methylthiotransferase RimO from Campylobacter jejuni subsp. jejuni serotype O:23/36 (strain 81-176).